Reading from the N-terminus, the 484-residue chain is Probable UDP-N-acetylglucosamine pyrophosphorylase (484 aa).

A Substrate binding motif is present at residues 107–110 (LAGG). Residues 107–110 (LAGG), Lys-121, Gln-200, and Gly-226 each bind UTP. Asn-227 is a binding site for substrate. Residue Asp-255 participates in UTP binding. Residues 304 to 305 (EY) carry the Substrate binding motif. Lys-377 is a binding site for UTP. Position 407 (Lys-407) interacts with substrate.

It belongs to the UDPGP type 1 family.

The protein localises to the cytoplasm. The catalysed reaction is N-acetyl-alpha-D-glucosamine 1-phosphate + UTP + H(+) = UDP-N-acetyl-alpha-D-glucosamine + diphosphate. It functions in the pathway nucleotide-sugar biosynthesis; UDP-N-acetyl-alpha-D-glucosamine biosynthesis; UDP-N-acetyl-alpha-D-glucosamine from N-acetyl-alpha-D-glucosamine 1-phosphate: step 1/1. This is Probable UDP-N-acetylglucosamine pyrophosphorylase from Caenorhabditis elegans.